The sequence spans 707 residues: Complement C1r-A subcomponent (707 aa).

Residues Met-1 to Gly-16 form the signal peptide. In terms of domain architecture, CUB 1 spans Ser-17 to Val-140. The Ca(2+) site is built by Glu-65, Asp-73, and Asp-118. Residues Cys-70 and Cys-88 are joined by a disulfide bond. A glycan (N-linked (GlcNAc...) asparagine) is linked at Asn-124. Ca(2+) is bound by residues Asp-141, Leu-142, and Glu-144. An EGF-like; calcium-binding domain is found at Asp-141–Gln-189. Cystine bridges form between Cys-145–Cys-164, Cys-160–Cys-173, Cys-175–Cys-188, and Cys-192–Cys-219. Asn-166, Tyr-167, and Gly-170 together coordinate Ca(2+). A (3R)-3-hydroxyasparagine modification is found at Asn-166. The CUB 2 domain maps to Cys-192–Glu-304. The residue at position 205 (Ser-205) is a Phosphoserine; by CK2. An N-linked (GlcNAc...) asparagine glycan is attached at Asn-220. Ca(2+) is bound by residues Asp-242, Asp-252, Asp-289, and Asp-293. Cysteines 249 and 267 form a disulfide. Sushi domains follow at residues Ile-306–Ile-372 and Lys-373–Pro-448. 5 disulfide bridges follow: Cys-308–Cys-357, Cys-337–Cys-370, Cys-375–Cys-428, Cys-405–Cys-446, and Cys-450–Cys-579. Positions Ile-463–Gly-704 constitute a Peptidase S1 domain. Active-site charge relay system residues include His-501 and Asp-559. A glycan (N-linked (GlcNAc...) asparagine) is linked at Asn-583. 2 cysteine pairs are disulfide-bonded: Cys-622–Cys-641 and Cys-652–Cys-682. Ser-656 acts as the Charge relay system in catalysis.

It belongs to the peptidase S1 family. As to quaternary structure, core component of the complement C1 complex, a calcium-dependent complex composed of 1 molecule of the C1Q subcomplex, 2 molecules of C1R and 2 molecules of C1S. The C1Q subcomplex is composed 18 subunits: 3 chains of C1QA, C1QB, and C1QC trimerize to form 6 collagen-like triple helices connected to six globular ligand-recognition modules. Within the C1 complex, C1R is a dimer of identical chains, each of which is activated by cleavage into two chains, heavy and light, connected by disulfide bonds. Post-translationally, cleaved and activated by autocatalytic processing to generate Complement C1r subcomponent heavy and light chains that are connected by disulfide bonds. In terms of processing, the iron and 2-oxoglutarate dependent 3-hydroxylation of aspartate and asparagine is (R) stereospecific within EGF domains.

It is found in the secreted. The protein localises to the cell surface. It carries out the reaction Selective cleavage of Lys(or Arg)-|-Ile bond in complement subcomponent C1s to form the active form of C1s (EC 3.4.21.42).. Its activity is regulated as follows. Activated by the C1Q subcomplex of the C1 complex following C1Q binding to immunoglobulins (IgG or IgM) complexed with antigens to form antigen-antibody complexes on the surface of pathogens. Immunoglobulin-binding promotes autoactivation of C1R, which results in the cleavage of the Arg-Ile bond in the catalytic domain. Functionally, serine protease component of the complement C1 complex, a multiprotein complex that initiates the classical pathway of the complement system, a cascade of proteins that leads to phagocytosis and breakdown of pathogens and signaling that strengthens the adaptive immune system. C1R catalyzes the first enzymatic step in the classical complement pathway: it is activated by the C1Q subcomplex of the C1 complex, which associates with IgG or IgM immunoglobulins complexed with antigens to form antigen-antibody complexes on the surface of pathogens. Immunoglobulin-binding promotes the autocatalytic cleavage and activation of C1R. Activated C1R then cleaves and activates C1S, the second protease of the classical complement pathway. It is unclear if C1R activates C1S within single, strained C1 complexes or between neighboring C1 complexes on surfaces. The sequence is that of Complement C1r-A subcomponent (C1ra) from Mus musculus (Mouse).